Reading from the N-terminus, the 269-residue chain is Growth-regulating factor 11 (269 aa).

Basic and acidic residues predominate over residues 1–11 (MAAEGEAKKDS). The interval 1 to 71 (MAAEGEAKKD…GKEDVEEGGV (71 aa)) is disordered. The span at 43–52 (GEAGGGGGGG) shows a compositional bias: gly residues. Acidic residues predominate over residues 58–68 (EEEEGKEDVEE). The 36-residue stretch at 114 to 149 (AFTAMQLQELEQQSRVYQYMAARVPVPTHLVFPIWK) folds into the QLQ domain. Residues 180-224 (EPEPGRCRRTDGKKWRCWRNAIANEKYCERHMHRGRKRPVQLVVE) enclose the WRC domain. Short sequence motifs (bipartite nuclear localization signal) lie at residues 185-195 (RCRRTDGKKWR) and 213-217 (RGRKR). The tract at residues 212–269 (HRGRKRPVQLVVEDDEPDSTSGSKPASGKATEGGKKTDDKSSSSKKLAVAAPAAVEST) is disordered. Residues 243–253 (EGGKKTDDKSS) are compositionally biased toward basic and acidic residues. Low complexity predominate over residues 255–269 (SKKLAVAAPAAVEST).

It belongs to the GRF family.

It is found in the nucleus. Functionally, transcription activator that plays a regulatory role in gibberellin-induced stem elongation. The chain is Growth-regulating factor 11 (GRF11) from Oryza sativa subsp. japonica (Rice).